Consider the following 512-residue polypeptide: cAMP-dependent protein kinase catalytic subunit (512 aa).

Residues 1 to 15 (MDTTAVASKGSTNVG) show a composition bias toward polar residues. Disordered stretches follow at residues 1 to 79 (MDTT…SSLW) and 118 to 166 (IDNL…GLRD). Over residues 16-27 (SSTDTLSTSASL) the composition is skewed to low complexity. Polar residues-rich tracts occupy residues 32-52 (NAGS…SFNG) and 62-79 (SDAS…SSLW). Positions 143-166 (SRDGRGELGSEHGERRSAMDGLRD) are enriched in basic and acidic residues. The 256-residue stretch at 201-456 (FNFLQTLGTG…SMDIIMHPWF (256 aa)) folds into the Protein kinase domain. ATP-binding positions include 207 to 215 (LGTGSFGRV) and Lys-230. Catalysis depends on Asp-324, which acts as the Proton acceptor. Phosphothreonine is present on Thr-356. The 56-residue stretch at 457–512 (RDISWDKILTRKIEVPYVPPIQAGMGDSSQFDAYADVATDYGTSEDPEFTSIFKDF) folds into the AGC-kinase C-terminal domain.

Belongs to the protein kinase superfamily. AGC Ser/Thr protein kinase family. cAMP subfamily.

It catalyses the reaction L-seryl-[protein] + ATP = O-phospho-L-seryl-[protein] + ADP + H(+). The catalysed reaction is L-threonyl-[protein] + ATP = O-phospho-L-threonyl-[protein] + ADP + H(+). Activated by cAMP. The chain is cAMP-dependent protein kinase catalytic subunit (pka1) from Schizosaccharomyces pombe (strain 972 / ATCC 24843) (Fission yeast).